Reading from the N-terminus, the 834-residue chain is MIFKKLFSKGSTSPTTRPRGATFSGTFPTDVLSDDGSGTNTNGLSNSTTNPSSIHSTPTTPTTTASTNLTNSNKLSTLAPITNGNRSLRGSKDGSGTTKESKKKVLTLNEKQKLLLKSMEYIKGSGTYYGNYMEFYEIPIQIYVGTEPSETYPSLSYNTELRSLILDFNKITEIPEQIGLLPNLKHLSLAANQLSQVPEFLSQLKSLESLELGINQFTSFPLNICKIKSLTLLRLETNNIKSLPDDFINLENLKDLSLLDNQLKEIPDSLPNNIEKLNLGCNDIINSYSKSLIRISHSLTTLNLSENKIEVLDESLSCLVNVKTLILDCNMIKVIPGSVLGSWKSLVTLNLPHNFISDLPAEIVTLDNLRIIDLRGNNFEFCKNYPSSESSSILFKIEEFIKDKEKLKSLILKENLEILSKLKDDNSTTTTTNINSNLDVPIIITTNIETIPTTSTTATTTETTNDITFKISDITEIIEKTDTTTTTTTTNQTDNVKLEEKVYEKQENDENNSVTLETTTTISIASDNTDEASIQIPQKEDGDKENLENDDKLLQESFSENNNNNNNEKQQEQQENPLKESQGKIQQLEEELEKLEQKQLELKDKIRLEKIKYQEIQQQSPRLSQQENNQEAIVVNTQPSSPPPTIIVNEQKSEKLENEKPTKREQPMVVVTKNNNKAEVEMTAPNQLIFWQSIVPDLIIDKLYLGCRECAMNKSWLKDNNVTHILTVANFKPLYPDLFKYLIINIDDVDEANIYQYFKEMNTFIDEGREKGGVLIHCRAGVSRSATATIAYIMMKNSVKFQEAFDITIKGRSRIYPNRGFLNQLKKFEKDLSK.

Positions 1 to 103 (MIFKKLFSKG…GSGTTKESKK (103 aa)) are disordered. The span at 36-78 (GSGTNTNGLSNSTTNPSSIHSTPTTPTTTASTNLTNSNKLSTL) shows a compositional bias: low complexity. Polar residues predominate over residues 79 to 98 (APITNGNRSLRGSKDGSGTT). LRR repeat units lie at residues 160 to 181 (ELRSLILDFNKITEIPEQIGLL), 183 to 204 (NLKHLSLAANQLSQVPEFLSQL), 206 to 226 (SLESLELGINQFTSFPLNICK), 229 to 251 (SLTLLRLETNNIKSLPDDFINLE), 252 to 273 (NLKDLSLLDNQLKEIPDSLPNN), 274 to 292 (IEKLNLGCNDIINSYSKSL), 298 to 319 (SLTTLNLSENKIEVLDESLSCL), 321 to 342 (NVKTLILDCNMIKVIPGSVLGS), 345 to 366 (SLVTLNLPHNFISDLPAEIVTL), and 368 to 389 (NLRIIDLRGNNFEFCKNYPSSE). The interval 503–584 (YEKQENDENN…ENPLKESQGK (82 aa)) is disordered. A compositionally biased stretch (polar residues) spans 511 to 536 (NNSVTLETTTTISIASDNTDEASIQI). Composition is skewed to basic and acidic residues over residues 538 to 554 (QKEDGDKENLENDDKLL) and 569 to 582 (KQQEQQENPLKESQ). The stretch at 555-615 (QESFSENNNN…IRLEKIKYQE (61 aa)) forms a coiled coil. The region spanning 695–834 (VPDLIIDKLY…LKKFEKDLSK (140 aa)) is the Tyrosine-protein phosphatase domain. The Phosphocysteine intermediate role is filled by Cys778.

This sequence belongs to the protein-tyrosine phosphatase family. Non-receptor class dual specificity subfamily.

The catalysed reaction is O-phospho-L-tyrosyl-[protein] + H2O = L-tyrosyl-[protein] + phosphate. It catalyses the reaction O-phospho-L-seryl-[protein] + H2O = L-seryl-[protein] + phosphate. The enzyme catalyses O-phospho-L-threonyl-[protein] + H2O = L-threonyl-[protein] + phosphate. Functionally, probable phosphatase with dual specificity toward Ser/Thr and Tyr-containing proteins. Dephosphorylates pNPP, in vitro. Essential for proper regulation of erkB (erk2) and optimal motility during development. This chain is MAP kinase phosphatase with leucine-rich repeats protein 1 (mpl1), found in Dictyostelium discoideum (Social amoeba).